Consider the following 297-residue polypeptide: tRNA dimethylallyltransferase (297 aa).

10-17 (GITASGKS) contributes to the ATP binding site. 12–17 (TASGKS) is a substrate binding site. The interval 36-39 (DSKQ) is interaction with substrate tRNA.

Belongs to the IPP transferase family. Monomer. The cofactor is Mg(2+).

It carries out the reaction adenosine(37) in tRNA + dimethylallyl diphosphate = N(6)-dimethylallyladenosine(37) in tRNA + diphosphate. Functionally, catalyzes the transfer of a dimethylallyl group onto the adenine at position 37 in tRNAs that read codons beginning with uridine, leading to the formation of N6-(dimethylallyl)adenosine (i(6)A). The sequence is that of tRNA dimethylallyltransferase from Wolbachia pipientis wMel.